A 184-amino-acid polypeptide reads, in one-letter code: MNWRSERIWVEFITGSRKISNFCWAFILFLGSSGFLLVGISSYLGKNFISLFPPQQILFFPQGLVMSFYGIAGLFISAYLWCAISWNVGSGYDRFDRKEGIVCIFRWGFPGKNRRIFFRYLIKDIQSIRIELKEGIYTRRVLYLEIRGQGAIPLTRTDENLTPREMEQKAAELAYFLRVPIEVF.

The next 2 membrane-spanning stretches (helical) occupy residues 21 to 43 (NFCW…ISSY) and 63 to 85 (GLVM…CAIS).

It belongs to the Ycf4 family.

The protein localises to the plastid. It is found in the chloroplast thylakoid membrane. Seems to be required for the assembly of the photosystem I complex. This chain is Photosystem I assembly protein Ycf4, found in Spinacia oleracea (Spinach).